We begin with the raw amino-acid sequence, 228 residues long: Leucokinins (228 aa).

An N-terminal signal peptide occupies residues 1 to 18 (MAMLLQVALPLLAAVSWG). The propeptide occupies 19 to 164 (WELNENDDSL…PRFSPVSAIQ (146 aa)). The tract at residues 80 to 118 (EFSENNEAEDKSPTSAQNTQEHIPGNNFPPPAASNPPVN) is disordered. Glycine amide occurs at positions 180 and 193. The propeptide occupies 197–209 (NTGRVHRQPKVVI). The residue at position 217 (Gly-217) is a Glycine amide. Positions 221-228 (NQKDDNVF) are excised as a propeptide.

It localises to the secreted. Stimulates both fluid secretion by the Malpighian tubules and hindgut contractions. Depolarize the transepithelial voltage of the Malpighian tubules in concentrations of less than 10(-9) M and increase the frequency of hindgut contractions at concentrations above 10(-8) M. The protein is Leucokinins of Aedes aegypti (Yellowfever mosquito).